The following is a 139-amino-acid chain: Large ribosomal subunit protein uL16 (139 aa).

This sequence belongs to the universal ribosomal protein uL16 family. As to quaternary structure, part of the 50S ribosomal subunit.

Functionally, binds 23S rRNA and is also seen to make contacts with the A and possibly P site tRNAs. The polypeptide is Large ribosomal subunit protein uL16 (Microcystis aeruginosa (strain NIES-843 / IAM M-2473)).